The chain runs to 166 residues: Regulator of ribonuclease activity A (166 aa).

Belongs to the RraA family. In terms of assembly, homotrimer. Binds to both RNA-binding sites in the C-terminal region of Rne and to RhlB.

The protein resides in the cytoplasm. Functionally, globally modulates RNA abundance by binding to RNase E (Rne) and regulating its endonucleolytic activity. Can modulate Rne action in a substrate-dependent manner by altering the composition of the degradosome. Modulates RNA-binding and helicase activities of the degradosome. This is Regulator of ribonuclease activity A from Pasteurella multocida (strain Pm70).